We begin with the raw amino-acid sequence, 208 residues long: Uracil phosphoribosyltransferase (208 aa).

Residues Arg-77, Arg-102, and 129–137 (DPMLATGNS) contribute to the 5-phospho-alpha-D-ribose 1-diphosphate site. Residues Ile-193 and 198 to 200 (GDA) each bind uracil. Asp-199 serves as a coordination point for 5-phospho-alpha-D-ribose 1-diphosphate.

This sequence belongs to the UPRTase family. Mg(2+) serves as cofactor.

The catalysed reaction is UMP + diphosphate = 5-phospho-alpha-D-ribose 1-diphosphate + uracil. Its pathway is pyrimidine metabolism; UMP biosynthesis via salvage pathway; UMP from uracil: step 1/1. Allosterically activated by GTP. In terms of biological role, catalyzes the conversion of uracil and 5-phospho-alpha-D-ribose 1-diphosphate (PRPP) to UMP and diphosphate. The polypeptide is Uracil phosphoribosyltransferase (Mycoplasmopsis pulmonis (strain UAB CTIP) (Mycoplasma pulmonis)).